Reading from the N-terminus, the 2647-residue chain is Filamin-A (2647 aa).

Positions 1–15 (MSSSHSRAGQSAAGA) are enriched in low complexity. The tract at residues 1-39 (MSSSHSRAGQSAAGAAPGGGVDTRDAEMPATEKDLAEDA) is disordered. Ser-2 carries the post-translational modification N-acetylserine. The interval 2–274 (SSSHSRAGQS…PKAKLKPGAP (273 aa)) is actin-binding. A Phosphoserine modification is found at Ser-11. A compositionally biased stretch (basic and acidic residues) spans 22–39 (DTRDAEMPATEKDLAEDA). Glycyl lysine isopeptide (Lys-Gly) (interchain with G-Cter in ubiquitin) cross-links involve residues Lys-42, Lys-43, and Lys-135. Calponin-homology (CH) domains follow at residues 43–149 (KIQQ…LHYS) and 166–269 (QTPK…KAKL). The interval 271–294 (PGAPLRPKLNPKKARAYGPGIEPT) is disordered. 15 Filamin repeats span residues 276-374 (RPKL…EVYV), 376-474 (KSQG…TVTV), 475-570 (GQAC…EVKV), 571-663 (GTEC…MADI), 667-763 (PQDF…RVNV), 764-866 (GAGS…RVKV), 867-965 (EPSH…SVAV), 966-1061 (SPSL…PLEA), 1062-1154 (VAPT…KAHV), 1155-1249 (VPCF…KLQV), 1250-1349 (EPAV…QVPV), 1350-1442 (TEGC…KVPV), 1443-1539 (HDVT…KVKV), 1540-1636 (LPTH…RVRA), and 1649-1740 (VSIG…QVTA). A Glycyl lysine isopeptide (Lys-Gly) (interchain with G-Cter in SUMO1); alternate cross-link involves residue Lys-299. Lys-299 participates in a covalent cross-link: Glycyl lysine isopeptide (Lys-Gly) (interchain with G-Cter in SUMO2); alternate. Lys-376 and Lys-508 each carry N6-acetyllysine. Residues Lys-700, Lys-781, Lys-837, Lys-865, and Lys-906 each carry the N6-acetyllysine modification. A phosphoserine mark is found at Ser-968 and Ser-1055. Lys-1071 carries the post-translational modification N6-acetyllysine; alternate. Residue Lys-1071 is modified to N6-succinyllysine; alternate. Residues Ser-1081 and Ser-1084 each carry the phosphoserine modification. Thr-1089 is subject to Phosphothreonine. Phosphoserine occurs at positions 1301 and 1338. A disordered region spans residues 1361–1382 (HGPGIQSGTTNKPNKFTVETRG). An N6-acetyllysine modification is found at Lys-1372. 2 positions are modified to phosphoserine: Ser-1459 and Ser-1533. Residues 1490-1607 (PKGLVEPVDV…DNHDGTYTVA (118 aa)) form an interaction with furin region. N6-acetyllysine is present on Lys-1538. Residues Ser-1630 and Ser-1734 each carry the phosphoserine modification. Positions 1741-1778 (LAGDQPSVQPPLRSQQLAPQYTYAQGGQQTWAPERPLV) are hinge 1. 8 Filamin repeats span residues 1779-1860 (GVNG…QFYV), 1861-1950 (DYVN…PFTA), 1951-2039 (RVTG…PVVI), 2042-2131 (SEIG…SPFS), 2132-2230 (VKVT…QFTV), 2233-2325 (LGEG…VVPV), 2327-2420 (SPSG…KIRV), and 2424-2516 (GHGG…KAKV). Residue Ser-1835 is modified to Phosphoserine. 10 positions are modified to phosphoserine: Ser-1967, Ser-2053, Ser-2128, Ser-2152, Ser-2158, Ser-2163, Ser-2180, Ser-2284, Ser-2327, and Ser-2329. Thr-2336 carries the post-translational modification Phosphothreonine. Phosphoserine occurs at positions 2338, 2370, 2414, 2510, 2523, and 2526. Positions 2517–2551 (TGPRLVSNHSLHETSSVFVDSLTKATCAPQHGAPG) are hinge 2. The tract at residues 2517-2647 (TGPRLVSNHS…PGSPYRVVVP (131 aa)) is self-association site, tail. The stretch at 2552-2646 (PGPADASKVV…IPGSPYRVVV (95 aa)) is one Filamin 24 repeat. Lys-2569 is subject to N6-acetyllysine; alternate. Lys-2569 is subject to N6-succinyllysine; alternate. An N6-acetyllysine modification is found at Lys-2575. Thr-2599 is subject to Phosphothreonine. Residues Lys-2607 and Lys-2621 each carry the N6-acetyllysine modification.

The protein belongs to the filamin family. In terms of assembly, homodimer. Interacts with PDLIM2. Interacts with RFLNA and RFLNB. Interacts with FCGR1A, FLNB, FURIN, HSPB7, INPPL1, KCND2, MYOT, MYOZ1, ARHGAP24, PSEN1, PSEN2 and ECSCR. Also interacts with various other binding partners in addition to filamentous actin. Interacts (via N-terminus) with MIS18BP1 (via N-terminus). Interacts (via N-terminus) with TAF1B. Interacts with TMEM67 (via C-terminus) and MKS1. Interacts (via actin-binding domain) with MICALL2 (via CH domain). Interacts (via filamin repeat 5) with SYK; docks SYK to the plasma membrane. Interacts (via filamin repeats 19 and 21) with DRD3; increased PKA-mediated phosphorylation at Ser-2152. Interacts (via filamin repeat 21) with MAS1, AGTR1 and ADRA1D; increases PKA-mediated phosphorylation of FLNA at Ser-2152. Interacts (via filamin repeats 4, 9, 12, 17, 19, 21, and 23) with GP1BA (high affinity), ITGB7, ITGB2 and FBLIM1. Interacts with CEACAM1 (via cytoplasmic domain); inhibits cell migration and cell scattering by interfering with the interaction between FLNA and RALA. Interacts with FOXC1. Interacts (via calponin-homology (CH) domain 1 and filamin repeat 24) with CRMP1; the interaction alters FLNA ternary structure and thus promotes FLNA dissociation from F-actin. Interacts with DPYSL3/CRMP3 and DPYSL4/CRMP4. As to quaternary structure, interacts with integrin ITGB1 isoform 1/beta-1A and isoform 5/beta-1D. Interacts with LUZP1; the interaction is not necessary for colocalization of LUZP1 with F-actin. In terms of processing, phosphorylation at Ser-2152 is negatively regulated by the autoinhibited conformation of filamin repeats 19-21. Ligand binding induces a conformational switch triggering phosphorylation at Ser-2152 by PKA. Phosphorylation extent changes in response to cell activation. Post-translationally, polyubiquitination in the CH1 domain by a SCF-like complex containing ASB2 leads to proteasomal degradation. Prior dissociation from actin may be required to expose the target lysines. Ubiquitinated in endothelial cells by RNF213 downstream of the non-canonical Wnt signaling pathway, leading to its degradation by the proteasome. Ubiquitous.

The protein resides in the cytoplasm. The protein localises to the cell cortex. It is found in the cytoskeleton. It localises to the perikaryon. Its subcellular location is the cell projection. The protein resides in the growth cone. The protein localises to the podosome. Its function is as follows. Promotes orthogonal branching of actin filaments and links actin filaments to membrane glycoproteins. Anchors various transmembrane proteins to the actin cytoskeleton and serves as a scaffold for a wide range of cytoplasmic signaling proteins. Interaction with FLNB may allow neuroblast migration from the ventricular zone into the cortical plate. Tethers cell surface-localized furin, modulates its rate of internalization and directs its intracellular trafficking. Involved in ciliogenesis. Plays a role in cell-cell contacts and adherens junctions during the development of blood vessels, heart and brain organs. Plays a role in platelets morphology through interaction with SYK that regulates ITAM- and ITAM-like-containing receptor signaling, resulting in by platelet cytoskeleton organization maintenance. During the axon guidance process, required for growth cone collapse induced by SEMA3A-mediated stimulation of neurons. The polypeptide is Filamin-A (FLNA) (Homo sapiens (Human)).